A 98-amino-acid polypeptide reads, in one-letter code: Integration host factor subunit alpha (98 aa).

Residues 51 to 71 (NFDLRDKNERPGRNPKTGEDI) form a disordered region. Basic and acidic residues predominate over residues 53–69 (DLRDKNERPGRNPKTGE).

Belongs to the bacterial histone-like protein family. As to quaternary structure, heterodimer of an alpha and a beta chain.

In terms of biological role, this protein is one of the two subunits of integration host factor, a specific DNA-binding protein that functions in genetic recombination as well as in transcriptional and translational control. The protein is Integration host factor subunit alpha of Vibrio parahaemolyticus serotype O3:K6 (strain RIMD 2210633).